Consider the following 295-residue polypeptide: Apolipoprotein E (295 aa).

A signal peptide spans 1–18 (MKVLWAALLVTFLAGCQA). Tandem repeats lie at residues 80-101 (TLMD…EQLS), 102-123 (PVAE…ARLG), 124-145 (ADME…AMLG), 146-167 (QSTE…KRLL), 193-211 (TVGS…AKLR), and 212-233 (ARME…EQVA). The 6 X 22 AA approximate tandem repeats stretch occupies residues 80 to 233 (TLMDETMKEL…RLDEVKEQVA (154 aa)). A Methionine sulfoxide modification is found at Met-143. Ser-147 is modified (phosphoserine). The interval 158 to 168 (HLRKLRKRLLR) is LDL and other lipoprotein receptors binding. Residue 162–165 (LRKR) participates in heparin binding. The lipid-binding and lipoprotein association stretch occupies residues 191-268 (AATVGSLASQ…SWFEPLVEDM (78 aa)). Residues 244-295 (QQISLQAEAFQARLKSWFEPLVEDMQRQWAGLVEKVQAAVGASTAPVPSDNH) form a homooligomerization region. Residues 256–268 (RLKSWFEPLVEDM) are specificity for association with VLDL.

It belongs to the apolipoprotein A1/A4/E family. In terms of assembly, homotetramer. May interact with ABCA1; functionally associated with ABCA1 in the biogenesis of HDLs. May interact with APP/A4 amyloid-beta peptide; the interaction is extremely stable in vitro but its physiological significance is unclear. May interact with MAPT. May interact with MAP2. In the cerebrospinal fluid, interacts with secreted SORL1. Interacts with PMEL; this allows the loading of PMEL luminal fragment on ILVs to induce fibril nucleation. In terms of processing, APOE exists as multiple glycosylated and sialylated glycoforms within cells and in plasma. The extent of glycosylation and sialylation are tissue and context specific. Glycated in plasma VLDL. Post-translationally, phosphorylated by FAM20C in the extracellular medium.

It localises to the secreted. Its subcellular location is the extracellular space. The protein resides in the extracellular matrix. It is found in the extracellular vesicle. The protein localises to the endosome. It localises to the multivesicular body. Its function is as follows. APOE is an apolipoprotein, a protein associating with lipid particles, that mainly functions in lipoprotein-mediated lipid transport between organs via the plasma and interstitial fluids. APOE is a core component of plasma lipoproteins and is involved in their production, conversion and clearance. Apolipoproteins are amphipathic molecules that interact both with lipids of the lipoprotein particle core and the aqueous environment of the plasma. As such, APOE associates with chylomicrons, chylomicron remnants, very low density lipoproteins (VLDL) and intermediate density lipoproteins (IDL) but shows a preferential binding to high-density lipoproteins (HDL). It also binds a wide range of cellular receptors including the LDL receptor/LDLR, the LDL receptor-related proteins LRP1, LRP2 and LRP8 and the very low-density lipoprotein receptor/VLDLR that mediate the cellular uptake of the APOE-containing lipoprotein particles. Finally, APOE also has a heparin-binding activity and binds heparan-sulfate proteoglycans on the surface of cells, a property that supports the capture and the receptor-mediated uptake of APOE-containing lipoproteins by cells. A main function of APOE is to mediate lipoprotein clearance through the uptake of chylomicrons, VLDLs, and HDLs by hepatocytes. APOE is also involved in the biosynthesis by the liver of VLDLs as well as their uptake by peripheral tissues ensuring the delivery of triglycerides and energy storage in muscle, heart and adipose tissues. By participating in the lipoprotein-mediated distribution of lipids among tissues, APOE plays a critical role in plasma and tissues lipid homeostasis. APOE is also involved in two steps of reverse cholesterol transport, the HDLs-mediated transport of cholesterol from peripheral tissues to the liver, and thereby plays an important role in cholesterol homeostasis. First, it is functionally associated with ABCA1 in the biogenesis of HDLs in tissues. Second, it is enriched in circulating HDLs and mediates their uptake by hepatocytes. APOE also plays an important role in lipid transport in the central nervous system, regulating neuron survival and sprouting. This is Apolipoprotein E (APOE) from Macaca mulatta (Rhesus macaque).